The chain runs to 270 residues: UPF0354 protein BCAH820_4810 (270 aa).

The protein belongs to the UPF0354 family.

This chain is UPF0354 protein BCAH820_4810, found in Bacillus cereus (strain AH820).